Consider the following 248-residue polypeptide: Protein UL24 homolog (248 aa).

Residues 194 to 248 (DRPRPTAQGHRPRTHVGPKPSQLTARVPRSARAGRAGGRKGQVGAVGQVCPGAQK) are disordered. The segment covering 218–227 (ARVPRSARAG) has biased composition (low complexity).

Belongs to the herpesviridae UL24 family.

It localises to the virion. The protein localises to the host cytoplasm. The protein resides in the host nucleus. It is found in the host nucleolus. Its subcellular location is the host Golgi apparatus. May participate in nuclear egress of viral particles. Plays a role in the dispersal of several host nucleolar proteins including NCL/nucleolin and NPM1. Since deletion of host NCL/nucleolin negatively impact on nuclear egress, UL24 supposedly acts on this process through its effect on host nucleoli. This is Protein UL24 homolog from Homo sapiens (Human).